The following is a 753-amino-acid chain: Putative cyclic nucleotide-gated ion channel 8 (753 aa).

At 1 to 111 (MYKSQYISGH…DKTLLLWNRM (111 aa)) the chain is on the cytoplasmic side. The chain crosses the membrane as a helical span at residues 112 to 132 (FVISCILAVSVDPLFFYLPIV). At 133–145 (DNSKNCIGIDSKL) the chain is on the extracellular side. A helical membrane pass occupies residues 146–166 (AVTTTTLRTIIDVFYLTRMAL). Residues 167–199 (QFRTAYIAPSSRVFGRGELVIDPAKIAERYLTR) are Cytoplasmic-facing. A helical membrane pass occupies residues 200 to 220 (YFIVDFLAVLPLPQIAVWKFL). Topologically, residues 221 to 233 (HGSKGTDVLPTKQ) are extracellular. A helical membrane pass occupies residues 234–254 (ALLHIVITQYIPRFVRFIPLT). Residues 255–274 (SELKKTAGAFAEGAWAGAAY) lie on the Cytoplasmic side of the membrane. The chain crosses the membrane as a helical span at residues 275-295 (YLLWYMLASHITGAFWYMLSV). Topologically, residues 296-402 (ERNDTCLRSA…QGLQTSTYPG (107 aa)) are extracellular. Residues 403–423 (EVLFSIAIAVAGLLLFALLIG) traverse the membrane as a helical segment. Topologically, residues 424–753 (NMQTYLQSLT…FEALDTDDLN (330 aa)) are cytoplasmic. Residues 508 to 638 (LFAN…TFRF) and glutamate 579 contribute to the a nucleoside 3',5'-cyclic phosphate site. Residues 624–639 (FRRLHSRQVQQTFRFY) are calmodulin-binding. The region spanning 644-673 (RTWAACFIQAAWRRHLRRKIAELRRKEEEE) is the IQ domain. Residues 731 to 753 (KSLMNLTKPSEPDFEALDTDDLN) form a disordered region. Over residues 742 to 753 (PDFEALDTDDLN) the composition is skewed to acidic residues.

It belongs to the cyclic nucleotide-gated cation channel (TC 1.A.1.5) family. Homotetramer or heterotetramer.

Its subcellular location is the cell membrane. Putative cyclic nucleotide-gated ion channel. This Arabidopsis thaliana (Mouse-ear cress) protein is Putative cyclic nucleotide-gated ion channel 8 (CNGC8).